A 239-amino-acid polypeptide reads, in one-letter code: Hydroxyacylglutathione hydrolase (239 aa).

The Zn(2+) site is built by His-54, His-56, Asp-58, His-59, His-112, Asp-131, and His-169.

Belongs to the metallo-beta-lactamase superfamily. Glyoxalase II family. Monomer. Zn(2+) serves as cofactor.

It catalyses the reaction an S-(2-hydroxyacyl)glutathione + H2O = a 2-hydroxy carboxylate + glutathione + H(+). Its pathway is secondary metabolite metabolism; methylglyoxal degradation; (R)-lactate from methylglyoxal: step 2/2. In terms of biological role, thiolesterase that catalyzes the hydrolysis of S-D-lactoyl-glutathione to form glutathione and D-lactic acid. The polypeptide is Hydroxyacylglutathione hydrolase (Pelagibacter ubique (strain HTCC1062)).